Here is an 87-residue protein sequence, read N- to C-terminus: MANHSSAKKAARQTVKKTLVNKRRASAIKTFVKKVLHEINQGNKEEANSALVIAQSKIMQGVKKNIIKLNTASRKISKLSKKIKTMN.

This sequence belongs to the bacterial ribosomal protein bS20 family.

In terms of biological role, binds directly to 16S ribosomal RNA. This is Small ribosomal subunit protein bS20 from Rickettsia bellii (strain OSU 85-389).